Reading from the N-terminus, the 511-residue chain is Ribonuclease E/G-like protein (511 aa).

The region spanning 35-117 (SDIYLGTVDK…LTANITLSGR (83 aa)) is the S1 motif domain. Residues D296 and D339 each contribute to the Mg(2+) site.

It belongs to the RNase E/G family. Mg(2+) is required as a cofactor.

Its subcellular location is the plastid. It is found in the chloroplast stroma. Functionally, involved in intercistronic processing of primary transcripts from chloroplast operons. The endonucleolytic activity of the enzyme depends on the number of phosphates at the 5' end, is inhibited by structured RNA, and preferentially cleaves A/U-rich sequences. The chain is Ribonuclease E/G-like protein (rne) from Porphyra purpurea (Red seaweed).